Here is a 460-residue protein sequence, read N- to C-terminus: GTPase Der (460 aa).

EngA-type G domains follow at residues 2–164 and 196–368; these read QSII…HEEF and IRVG…ENFT. Residues 8-15, 55-59, 116-119, 202-209, 249-253, and 313-316 each bind GTP; these read GKPNVGKS, DSGGL, NKVD, GRVNVGKS, DTAGI, and NKWD. The KH-like domain maps to 369-453; the sequence is QKIQTSKLNT…PLVIASRKKG (85 aa).

It belongs to the TRAFAC class TrmE-Era-EngA-EngB-Septin-like GTPase superfamily. EngA (Der) GTPase family. As to quaternary structure, associates with the 50S ribosomal subunit.

Its function is as follows. GTPase that plays an essential role in the late steps of ribosome biogenesis. The chain is GTPase Der from Campylobacter jejuni subsp. jejuni serotype O:23/36 (strain 81-176).